Reading from the N-terminus, the 384-residue chain is UPF0496 protein At3g28310/At3g28320 (384 aa).

A coiled-coil region spans residues 184-215; sequence QESLFDRVTETKERIAKEIEEVQKRISNVNTA. A run of 2 helical transmembrane segments spans residues 217-237 and 242-262; these read IVSH…CIAL and VGAP…VQWV. Residues 264–361 adopt a coiled-coil conformation; that stretch reads VNYVLNNSLE…TTKITEVCET (98 aa).

The protein belongs to the UPF0496 family.

Its subcellular location is the membrane. This chain is UPF0496 protein At3g28310/At3g28320, found in Arabidopsis thaliana (Mouse-ear cress).